A 120-amino-acid chain; its full sequence is Large ribosomal subunit protein bL17 (120 aa).

Belongs to the bacterial ribosomal protein bL17 family. As to quaternary structure, part of the 50S ribosomal subunit. Contacts protein L32.

The protein is Large ribosomal subunit protein bL17 of Mesomycoplasma hyopneumoniae (strain J / ATCC 25934 / NCTC 10110) (Mycoplasma hyopneumoniae).